A 702-amino-acid polypeptide reads, in one-letter code: Ribosomal RNA large subunit methyltransferase K/L (702 aa).

A THUMP domain is found at 43–154; the sequence is LVYQSLMWSR…KETASIALDL (112 aa).

It belongs to the methyltransferase superfamily. RlmKL family.

The protein resides in the cytoplasm. It catalyses the reaction guanosine(2445) in 23S rRNA + S-adenosyl-L-methionine = N(2)-methylguanosine(2445) in 23S rRNA + S-adenosyl-L-homocysteine + H(+). It carries out the reaction guanosine(2069) in 23S rRNA + S-adenosyl-L-methionine = N(2)-methylguanosine(2069) in 23S rRNA + S-adenosyl-L-homocysteine + H(+). Functionally, specifically methylates the guanine in position 2445 (m2G2445) and the guanine in position 2069 (m7G2069) of 23S rRNA. This Escherichia coli (strain K12 / DH10B) protein is Ribosomal RNA large subunit methyltransferase K/L.